A 591-amino-acid polypeptide reads, in one-letter code: Vomeromodulin (591 aa).

A signal peptide spans 1-18 (MWVLQALAIMLSIQAGTL). A disordered region spans residues 151-172 (NEGNGDSSKPSSGSKATGGLGQ). N-linked (GlcNAc...) asparagine glycosylation is found at asparagine 421 and asparagine 516.

N-glycosylated. The N-glycans consist mainly of complex sialylated and fucosylated biantennary structures. In terms of tissue distribution, expressed in lung. Not detected in other tissues tested (at protein level).

It localises to the secreted. This is Vomeromodulin from Mus musculus (Mouse).